A 160-amino-acid polypeptide reads, in one-letter code: Glucagon-1 (160 aa).

An N-terminal signal peptide occupies residues 1–22 (MSDPGFLAAPVLLLLLVSLASA). 3 propeptides span residues 23 to 40 (SLEQ…RPLS), 74 to 79 (GGSELQ), and 116 to 127 (DGGDHLAENSED). The segment at 112 to 132 (KSRRDGGDHLAENSEDKRHAE) is disordered.

It belongs to the glucagon family.

The protein localises to the secreted. Functionally, promotes hydrolysis of glycogen and lipids, and raises the blood sugar level. In Petromyzon marinus (Sea lamprey), this protein is Glucagon-1 (gcg1).